A 255-amino-acid polypeptide reads, in one-letter code: uncharacterized protein (255 aa).

Residues 42 to 67 (ACSGSPPEPGKGRPDTTPEQEVPVTA) are disordered.

This is an uncharacterized protein from Mycobacterium tuberculosis (strain CDC 1551 / Oshkosh).